Consider the following 172-residue polypeptide: MSRLNEYQVIGRNLPTESVPEPKLFRMRIFAPNTVVAKSRYWYFLQKLHKVKKASGEIVSVNIISEAKPTKVKTFGIWLRYESRSGIHNMYKEYRDVTRVGAVETMYQDLAARHRARFRSIHILKVVELEKTDDVKRQYVKQFLTKDLKFPLPHRVQKSKKLFQATAPTTFY.

Belongs to the eukaryotic ribosomal protein eL20 family. As to quaternary structure, component of the large ribosomal subunit. Mature ribosomes consist of a small (40S) and a large (60S) subunit. The 40S subunit contains about 32 different proteins and 1 molecule of RNA (18S). The 60S subunit contains 45 different proteins and 3 molecules of RNA (25S, 5.8S and 5S).

The protein resides in the cytoplasm. Component of the ribosome, a large ribonucleoprotein complex responsible for the synthesis of proteins in the cell. The small ribosomal subunit (SSU) binds messenger RNAs (mRNAs) and translates the encoded message by selecting cognate aminoacyl-transfer RNA (tRNA) molecules. The large subunit (LSU) contains the ribosomal catalytic site termed the peptidyl transferase center (PTC), which catalyzes the formation of peptide bonds, thereby polymerizing the amino acids delivered by tRNAs into a polypeptide chain. The nascent polypeptides leave the ribosome through a tunnel in the LSU and interact with protein factors that function in enzymatic processing, targeting, and the membrane insertion of nascent chains at the exit of the ribosomal tunnel. This Candida albicans (strain SC5314 / ATCC MYA-2876) (Yeast) protein is Large ribosomal subunit protein eL20.